The following is a 405-amino-acid chain: Probable tRNA sulfurtransferase (405 aa).

The 106-residue stretch at 60–165 (DKVMGRLKLV…LNGIFLSSET (106 aa)) folds into the THUMP domain. ATP contacts are provided by residues 183–184 (ML), 208–209 (HF), R265, G287, and Q296.

Belongs to the ThiI family.

The protein resides in the cytoplasm. It catalyses the reaction [ThiI sulfur-carrier protein]-S-sulfanyl-L-cysteine + a uridine in tRNA + 2 reduced [2Fe-2S]-[ferredoxin] + ATP + H(+) = [ThiI sulfur-carrier protein]-L-cysteine + a 4-thiouridine in tRNA + 2 oxidized [2Fe-2S]-[ferredoxin] + AMP + diphosphate. The enzyme catalyses [ThiS sulfur-carrier protein]-C-terminal Gly-Gly-AMP + S-sulfanyl-L-cysteinyl-[cysteine desulfurase] + AH2 = [ThiS sulfur-carrier protein]-C-terminal-Gly-aminoethanethioate + L-cysteinyl-[cysteine desulfurase] + A + AMP + 2 H(+). It participates in cofactor biosynthesis; thiamine diphosphate biosynthesis. In terms of biological role, catalyzes the ATP-dependent transfer of a sulfur to tRNA to produce 4-thiouridine in position 8 of tRNAs, which functions as a near-UV photosensor. Also catalyzes the transfer of sulfur to the sulfur carrier protein ThiS, forming ThiS-thiocarboxylate. This is a step in the synthesis of thiazole, in the thiamine biosynthesis pathway. The sulfur is donated as persulfide by IscS. The protein is Probable tRNA sulfurtransferase of Lactiplantibacillus plantarum (strain ATCC BAA-793 / NCIMB 8826 / WCFS1) (Lactobacillus plantarum).